A 205-amino-acid chain; its full sequence is Golgi apparatus membrane protein TVP23 homolog B (205 aa).

The residue at position 1 (methionine 1) is an N-acetylmethionine. Positions 1-21 (MLSQDSNDDTEDVSLFDAEEE) are enriched in acidic residues. Positions 1-27 (MLSQDSNDDTEDVSLFDAEEETTNRPR) are disordered. 4 helical membrane-spanning segments follow: residues 34-53 (PVAS…VYLL), 54-72 (CELL…ILLL), 126-146 (IFWL…FSAL), and 152-172 (KWLA…YGYI).

This sequence belongs to the TVP23 family.

Its subcellular location is the membrane. In Mus musculus (Mouse), this protein is Golgi apparatus membrane protein TVP23 homolog B (Tvp23b).